The chain runs to 705 residues: Solute carrier family 28 member 3 (705 aa).

A compositionally biased stretch (basic and acidic residues) spans 1–21 (MSRSDPDPGKNSEPSKSKMSL). Positions 1–96 (MSRSDPDPGK…TEEESEDERQ (96 aa)) are disordered. The Cytoplasmic portion of the chain corresponds to 1 to 119 (MSRSDPDPGK…FCRKHRVILQ (119 aa)). The span at 48 to 63 (APGNSTVRSRVVQSGE) shows a compositional bias: polar residues. The span at 65-74 (GRAKQDDRQI) shows a compositional bias: basic and acidic residues. A helical membrane pass occupies residues 120–140 (HTIWAVLLTGFLALVIAACAL). Over 141 to 145 (NFHRA) the chain is Extracellular. The chain crosses the membrane as a helical span at residues 146–166 (LPLFVITLVTIFFVVWDRLMA). Topologically, residues 167 to 190 (KYEQRIDDVLSPGKRLLERHWFWL) are cytoplasmic. A helical transmembrane segment spans residues 191 to 211 (KWVVWCSLILAVILWLALDTA). At 212–214 (RLG) the chain is on the extracellular side. The chain crosses the membrane as a helical span at residues 215–236 (QQQLISFGGLVMYIVLLFLFSK). The Cytoplasmic portion of the chain corresponds to 237–244 (HPTRVYWR). A helical transmembrane segment spans residues 245-264 (PVFWGIGLQFLLGLLILRTR). The Extracellular segment spans residues 265-301 (PGFVAFDWMGKQVQTFLGYTDAGAQFVFGEKYTDHFF). A helical transmembrane segment spans residues 302–322 (AFKILPIVVFFSTVMSMLYYL). The Cytoplasmic portion of the chain corresponds to 323 to 346 (GLMQWIIRKVGWLMLVTMGSSPIE). The segment at residues 347-365 (SVVAAGNIFVGQTESPLLV) is an intramembrane region (helical). Residues 366–378 (QPYLPHVTKSELH) lie on the Cytoplasmic side of the membrane. The helical transmembrane segment at 379–401 (TIMTAGFATIAGSVLGAYISFGV) threads the bilayer. Residues 402-403 (SS) are Extracellular-facing. A helical membrane pass occupies residues 404–425 (THLLTASVMSAPAALAVAKLFW). Residues 426 to 460 (PETEKPKITLKNAMKMENGDSRNLLEAATQGASSS) lie on the Cytoplasmic side of the membrane. The helical transmembrane segment at 461-486 (IPLVANIAANLIAFLALLSFVNSALS) threads the bilayer. At 487–524 (WFGSMFDYPQLSFELICSYIFMPFSFMMGVDWQDRFMV) the chain is on the extracellular side. An intramembrane region (helical) is located at residues 525 to 544 (AKLIGYKTFFNEFVAYEHLS). The Extracellular portion of the chain corresponds to 545–583 (KFINLRKAAGPKFVNGVQQYMSIRSETIATYALCGFANF). A helical transmembrane segment spans residues 584 to 594 (GSLGIVIGGLT). Over 595-607 (SIAPSRKRDIASG) the chain is Cytoplasmic. Residues 608–630 (AMRALIAGTIACFMTACIAGMLS) traverse the membrane as a helical segment. Residues 631–705 (DTPVAINCHH…LNCGWIPNIP (75 aa)) are Extracellular-facing.

It belongs to the concentrative nucleoside transporter (CNT) (TC 2.A.41) family. Homotrimer. As to expression, expressed in kidney; in the proximal tubule, glomerulus and cortical collecting duct.

It localises to the cell membrane. It catalyses the reaction thymidine(out) + 2 Na(+)(out) = thymidine(in) + 2 Na(+)(in). The enzyme catalyses cytidine(out) + 2 Na(+)(out) = cytidine(in) + 2 Na(+)(in). It carries out the reaction uridine(out) + 2 Na(+)(out) = uridine(in) + 2 Na(+)(in). The catalysed reaction is adenosine(out) + 2 Na(+)(out) = adenosine(in) + 2 Na(+)(in). It catalyses the reaction guanosine(out) + 2 Na(+)(out) = guanosine(in) + 2 Na(+)(in). The enzyme catalyses inosine(out) + 2 Na(+)(out) = inosine(in) + 2 Na(+)(in). Functionally, sodium-dependent, pyrimidine- and purine-selective. Involved in the homeostasis of endogenous nucleosides. Exhibits the transport characteristics of the nucleoside transport system cib or N3 subtype (N3/cib) (with marked transport of both thymidine and inosine). Employs a 2:1 sodium/nucleoside ratio. Also able to transport gemcitabine, 3'-azido-3'-deoxythymidine (AZT), ribavirin and 3-deazauridine. This chain is Solute carrier family 28 member 3 (Slc28a3), found in Rattus norvegicus (Rat).